The following is a 262-amino-acid chain: Dihydroorotate dehydrogenase B (NAD(+)), electron transfer subunit (262 aa).

One can recognise an FAD-binding FR-type domain in the interval K3–V104. FAD contacts are provided by residues R53 to S56, L70 to R72, and G79 to T80. Positions 226, 231, 234, and 249 each coordinate [2Fe-2S] cluster.

It belongs to the PyrK family. As to quaternary structure, heterotetramer of 2 PyrK and 2 PyrD type B subunits. It depends on [2Fe-2S] cluster as a cofactor. The cofactor is FAD.

It functions in the pathway pyrimidine metabolism; UMP biosynthesis via de novo pathway; orotate from (S)-dihydroorotate (NAD(+) route): step 1/1. Its function is as follows. Responsible for channeling the electrons from the oxidation of dihydroorotate from the FMN redox center in the PyrD type B subunit to the ultimate electron acceptor NAD(+). In Lactococcus lactis subsp. lactis (strain IL1403) (Streptococcus lactis), this protein is Dihydroorotate dehydrogenase B (NAD(+)), electron transfer subunit.